Here is a 201-residue protein sequence, read N- to C-terminus: Orotate phosphoribosyltransferase (201 aa).

113–121 is a 5-phospho-alpha-D-ribose 1-diphosphate binding site; sequence EDIITTGKS. 2 residues coordinate orotate: Thr117 and Arg145.

The protein belongs to the purine/pyrimidine phosphoribosyltransferase family. PyrE subfamily. In terms of assembly, homodimer. Requires Mg(2+) as cofactor.

The catalysed reaction is orotidine 5'-phosphate + diphosphate = orotate + 5-phospho-alpha-D-ribose 1-diphosphate. It functions in the pathway pyrimidine metabolism; UMP biosynthesis via de novo pathway; UMP from orotate: step 1/2. Its function is as follows. Catalyzes the transfer of a ribosyl phosphate group from 5-phosphoribose 1-diphosphate to orotate, leading to the formation of orotidine monophosphate (OMP). This chain is Orotate phosphoribosyltransferase, found in Helicobacter acinonychis (strain Sheeba).